A 251-amino-acid polypeptide reads, in one-letter code: Probable transcriptional regulatory protein TGRD_462 (251 aa).

It belongs to the TACO1 family.

It is found in the cytoplasm. The chain is Probable transcriptional regulatory protein TGRD_462 from Endomicrobium trichonymphae.